The sequence spans 63 residues: Large ribosomal subunit protein uL29 (63 aa).

The protein belongs to the universal ribosomal protein uL29 family.

The chain is Large ribosomal subunit protein uL29 from Bordetella pertussis (strain Tohama I / ATCC BAA-589 / NCTC 13251).